The following is a 285-amino-acid chain: MIVCKTPEEVLDQVRLWKAQGKRIGFVPTMGYLHEGHASLFEECISKADKTVVSIFVNPAQFNDPEDYAKYPVNTEGDLKLCESKKVDLVFLPNKETIYPDGIPDIVLKIPNLMKSLCAVSRPGHFEGVLLVIFRLFHFVQPDFAFFGKKDYQQYLLIREFCNTLAFPIEVIGCETVRSSQGLALSSRNSRLSETEKEESLLIYRSLKLGENQIFSGIKNPLLVKEIMKDVLDSSSKIRLDYLEILNADTLDPLEVLEGEILLAIAAFIGPVRLIDNLTLSVPTS.

30 to 37 (MGYLHEGH) serves as a coordination point for ATP. The active-site Proton donor is the His-37. Gln-61 contributes to the (R)-pantoate binding site. Position 61 (Gln-61) interacts with beta-alanine. 148-151 (GKKD) is a binding site for ATP. Gln-154 lines the (R)-pantoate pocket. ATP is bound by residues Val-177 and 185–188 (LSSR).

This sequence belongs to the pantothenate synthetase family. In terms of assembly, homodimer.

The protein resides in the cytoplasm. The enzyme catalyses (R)-pantoate + beta-alanine + ATP = (R)-pantothenate + AMP + diphosphate + H(+). The protein operates within cofactor biosynthesis; (R)-pantothenate biosynthesis; (R)-pantothenate from (R)-pantoate and beta-alanine: step 1/1. In terms of biological role, catalyzes the condensation of pantoate with beta-alanine in an ATP-dependent reaction via a pantoyl-adenylate intermediate. In Leptospira interrogans serogroup Icterohaemorrhagiae serovar Lai (strain 56601), this protein is Pantothenate synthetase.